The chain runs to 196 residues: Ribonuclease HII (196 aa).

Residues 9–196 enclose the RNase H type-2 domain; it reads GLVCGIDEAG…GPVARQLSLL (188 aa). A divalent metal cation-binding residues include D15, E16, and D107.

The protein belongs to the RNase HII family. Mn(2+) serves as cofactor. The cofactor is Mg(2+).

The protein resides in the cytoplasm. It carries out the reaction Endonucleolytic cleavage to 5'-phosphomonoester.. Its function is as follows. Endonuclease that specifically degrades the RNA of RNA-DNA hybrids. This chain is Ribonuclease HII, found in Dechloromonas aromatica (strain RCB).